A 354-amino-acid chain; its full sequence is MSLDKIMNEAISPWMKGDGPDSDIVLSSRIRLARNFKKYQFSTMQNEEEAKQIQELFKKEFINKTVEPFGEFELLKMNELTPLQRRVLVEKHLISPNLAGTEYGACLLSESEHISVMLNEEDHIRIQCLFSGLQLSEALQSANQIDNWIEKEVEYAFDESLGYITSCPTNVGTGLRASVMIHLPGLVLTKRISRIIQVIQKLGLVVRGIYGEGSEALGNIFQVSNQMTLGKSEEDIIADLKSVIQQIIQQEKMARELIVQNSSIELEDKVYRSYGILANSRLIQSAEAANCLSDLRLGIDLGYIQGISRNILTELMVLTQPGILQQYAGGPLGPEERDYRRATLIRERLRIEKN.

The 231-residue stretch at 24–254 folds into the Phosphagen kinase C-terminal domain; it reads IVLSSRIRLA…QQIIQQEKMA (231 aa). ATP contacts are provided by residues 27-31, H92, R125, 176-180, and 207-212; these read SSRIR, RASVM, and RGIYGE. An RDXXRA motif of the pArg binding pocket involved in allosteric regulation motif is present at residues 337-342; it reads RDYRRA.

This sequence belongs to the ATP:guanido phosphotransferase family.

It carries out the reaction L-arginyl-[protein] + ATP = N(omega)-phospho-L-arginyl-[protein] + ADP + H(+). With respect to regulation, appears to be allosterically activated by the binding of pArg-containing polypeptides to the pArg-binding pocket localized in the C-terminal domain of McsB. In terms of biological role, catalyzes the specific phosphorylation of arginine residues in a large number of proteins. Is part of the bacterial stress response system. Protein arginine phosphorylation has a physiologically important role and is involved in the regulation of many critical cellular processes, such as protein homeostasis, motility, competence, and stringent and stress responses, by regulating gene expression and protein activity. The protein is Protein-arginine kinase of Bacillus thuringiensis subsp. konkukian (strain 97-27).